Reading from the N-terminus, the 86-residue chain is U15-lycotoxin-Ls1d (86 aa).

The N-terminal stretch at 1 to 20 (MNSKIFAVLLLLAFLSCVLS) is a signal peptide. The WAP domain occupies 21-66 (DQYCPKSSITACKKMNIRNDCCKDDDCTGGSWCCATPCGNFCKYPT). 5 disulfide bridges follow: Cys24–Cys54, Cys32–Cys58, Cys41–Cys53, Cys42–Cys80, and Cys47–Cys62.

This sequence belongs to the venom protein 11 family. 01 (wap-1) subfamily. In terms of processing, contains 5 disulfide bonds. Expressed by the venom gland.

It localises to the secreted. Functionally, has antibacterial activity. The protein is U15-lycotoxin-Ls1d of Lycosa singoriensis (Wolf spider).